The following is a 508-amino-acid chain: Glutamyl-tRNA(Gln) amidotransferase subunit B, mitochondrial (508 aa).

The protein belongs to the GatB/GatE family. GatB subfamily. In terms of assembly, subunit of the heterotrimeric GatFAB amidotransferase (AdT) complex, composed of A, B and F subunits.

It localises to the mitochondrion. It catalyses the reaction L-glutamyl-tRNA(Gln) + L-glutamine + ATP + H2O = L-glutaminyl-tRNA(Gln) + L-glutamate + ADP + phosphate + H(+). Its function is as follows. Allows the formation of correctly charged Gln-tRNA(Gln) through the transamidation of misacylated Glu-tRNA(Gln) in the mitochondria. The reaction takes place in the presence of glutamine and ATP through an activated gamma-phospho-Glu-tRNA(Gln). This Scheffersomyces stipitis (strain ATCC 58785 / CBS 6054 / NBRC 10063 / NRRL Y-11545) (Yeast) protein is Glutamyl-tRNA(Gln) amidotransferase subunit B, mitochondrial.